We begin with the raw amino-acid sequence, 317 residues long: Melanocyte-stimulating hormone receptor (317 aa).

Residues 1-37 (MPVQGSLRSLVGAVNSTPTASPHLRPATNQTEPQCLE) are Extracellular-facing. Asparagine 29 is a glycosylation site (N-linked (GlcNAc...) asparagine). The chain crosses the membrane as a helical span at residues 38–63 (VSVPVGLFLCLGLVSLVENTLVVAVI). At 64–72 (AKNRNLHSP) the chain is on the cytoplasmic side. A helical membrane pass occupies residues 73–93 (MYCFICCLALSDLLVSVSNVL). Residues 94 to 118 (KTAVLLLLEAGALAAQATVVQQLGN) are Extracellular-facing. Residues 119–140 (VINMLICSSMVSSLCFLGAIAM) form a helical membrane-spanning segment. The Cytoplasmic portion of the chain corresponds to 141–163 (DRYISIFYALRYHSIVTLARARR). The chain crosses the membrane as a helical span at residues 164–183 (AIAAVWVASILSSILFFTYY). Residues 184 to 191 (DRTAALLC) lie on the Extracellular side of the membrane. Residues 192 to 211 (LVVFFLAMLVLMAVLYVHML) form a helical membrane-spanning segment. Residues 212–240 (TQACQHAQGIARLHKRQHPVQQGWGLKGA) are Cytoplasmic-facing. Residues 241–266 (ATLAVLLGVFFLCWGPLFLHLTLIAV) form a helical membrane-spanning segment. Topologically, residues 267-279 (CPQHPTCNCIVKN) are extracellular. A helical membrane pass occupies residues 280–300 (FKLFLALIICNAIVDPLIYAF). Over 301–317 (RSQELRKTLKEVLLFSW) the chain is Cytoplasmic.

Belongs to the G-protein coupled receptor 1 family. In terms of assembly, interacts with MGRN1, but does not undergo MGRN1-mediated ubiquitination; this interaction competes with GNAS-binding and thus inhibits agonist-induced cAMP production. Interacts with OPN3; the interaction results in a decrease in MC1R-mediated cAMP signaling and ultimately a decrease in melanin production in melanocytes.

The protein resides in the cell membrane. Its function is as follows. Receptor for MSH (alpha, beta and gamma) and ACTH. The activity of this receptor is mediated by G proteins which activate adenylate cyclase. Mediates melanogenesis, the production of eumelanin (black/brown) and phaeomelanin (red/yellow), via regulation of cAMP signaling in melanocytes. The polypeptide is Melanocyte-stimulating hormone receptor (MC1R) (Varecia rubra (Red ruffed lemur)).